Here is a 259-residue protein sequence, read N- to C-terminus: Enkurin (259 aa).

Disordered stretches follow at residues 1-26 (MVAM…EPPQ) and 76-98 (PPKK…TDHP). Positions 76–88 (PPKKKFEWNERRK) are enriched in basic and acidic residues. The SH3-binding signature appears at 86-92 (RRKPPVP). The Enkurin domain occupies 163-255 (KRNEEVKKAQ…VLEKHKVIYI (93 aa)). Residues 163–258 (KRNEEVKKAQ…KHKVIYIANK (96 aa)) form an interaction with TRPC proteins region. The IQ domain maps to 179 to 190 (IQENLRKAAMKR).

In terms of assembly, microtubule inner protein component of sperm flagellar doublet microtubules. Binds calmodulin via its IQ domain. Interacts with TRPC1, TRPC2, TRPC5, but not TRPC3. Interacts with CFAP45. Expressed in trachea multiciliated cells.

It is found in the cytoplasm. The protein resides in the cytoskeleton. The protein localises to the flagellum axoneme. Its subcellular location is the cilium axoneme. In terms of biological role, adapter that functions to localize a calcium-sensitive signal transduction machinery in sperm to a calcium-permeable ion channel. Microtubule inner protein (MIP) part of the dynein-decorated doublet microtubules (DMTs) in cilia axoneme, which is required for motile cilia beating. The sequence is that of Enkurin (ENKUR) from Bos taurus (Bovine).